A 247-amino-acid polypeptide reads, in one-letter code: Putative trypsin-6 (247 aa).

Residues 1–15 (MNPLLILAFVGAAVA) form the signal peptide. The Peptidase S1 domain maps to 24-244 (IVGGYTCEEN…YVDWIKDTIA (221 aa)). The cysteines at positions 48 and 64 are disulfide-linked. Catalysis depends on His63, which acts as the Charge relay system. Glu75, Asn77, Val80, and Glu85 together coordinate Ca(2+). Asp107 acts as the Charge relay system in catalysis. 3 disulfide bridges follow: Cys139-Cys206, Cys171-Cys185, and Cys196-Cys220. Ser200 functions as the Charge relay system in the catalytic mechanism.

Belongs to the peptidase S1 family. Tryptase subfamily. As to expression, overexpressed in metastasing in non small cell lung tumors, leading to an enhanced cell migration.

It localises to the secreted. It carries out the reaction Preferential cleavage: Arg-|-Xaa, Lys-|-Xaa.. Its function is as follows. May regulate cell migration. The protein is Putative trypsin-6 (PRSS3P2) of Homo sapiens (Human).